The chain runs to 125 residues: uncharacterized protein (125 aa).

A helical membrane pass occupies residues 10 to 26 (IIILVCLMFLAIMVYIY).

It localises to the membrane. This is an uncharacterized protein from Rickettsia prowazekii (strain Madrid E).